Here is a 531-residue protein sequence, read N- to C-terminus: Tryptophan 6-halogenase ThaL (531 aa).

FAD contacts are provided by G13, T15, A16, A39, I42, I45, V47, and A50. The active site involves K79. P111 contributes to the L-tryptophan binding site. Positions 198 and 349 each coordinate FAD. Residues S360 and G361 each contribute to the chloride site. An FAD-binding site is contributed by I362. Residues Y454, Y455, E461, and F465 each coordinate L-tryptophan.

This sequence belongs to the flavin-dependent halogenase family. Bacterial tryptophan halogenase subfamily. In terms of assembly, homodimer. Monomer in solution.

The enzyme catalyses L-tryptophan + FADH2 + chloride + O2 = 6-chloro-L-tryptophan + FAD + 2 H2O. The catalysed reaction is D-tryptophan + FADH2 + chloride + O2 = 6-chloro-D-tryptophan + FAD + 2 H2O. Functionally, involved in the biosynthesis of thienodolin, a plant growth-regulating compound. Catalyzes the chlorination of tryptophan (Trp) at C6 position to yield 6-chloro-tryptophan. It is also able to use bromide ions to generate monobrominated Trp. In vitro, accepts a wide range of amides and peptides carrying either L- or D-Trp at the N-terminus. The polypeptide is Tryptophan 6-halogenase ThaL (Streptomyces albogriseolus).